The chain runs to 109 residues: Cell division suppressor protein YneA (109 aa).

The region spanning 39–90 (SEVNVSEGDSLWALADQYAGKSDMAKADFVSWVEKENNLADGHVEAGESVVI) is the LysM domain.

This sequence belongs to the YneA family.

The protein localises to the cytoplasm. Functionally, inhibits cell division during the SOS response. Affects a later stage of the cell division protein assembly, after the assembly of the Z ring, by probably suppressing recruitment of FtsL and/or DivIC to the division machinery. This Listeria monocytogenes serotype 4b (strain F2365) protein is Cell division suppressor protein YneA.